A 439-amino-acid chain; its full sequence is uncharacterized protein (439 aa).

Positions 273–439 (PIIILLDHSG…EARKIYKSIS (167 aa)) constitute a VWFA domain.

This is an uncharacterized protein from Methanocaldococcus jannaschii (strain ATCC 43067 / DSM 2661 / JAL-1 / JCM 10045 / NBRC 100440) (Methanococcus jannaschii).